The primary structure comprises 227 residues: Cytochrome c oxidase subunit 2 (227 aa).

Over 1 to 14 (MAYPFQLGLQDATS) the chain is Mitochondrial intermembrane. The chain crosses the membrane as a helical span at residues 15–45 (PIMEELLHFHDHTLMIVFLISSLVLYIISLM). The Mitochondrial matrix portion of the chain corresponds to 46–59 (LTTKLTHTSTMDAQ). The helical transmembrane segment at 60 to 87 (EVETVWTILPAIILILIALPSLRILYMM) threads the bilayer. The Mitochondrial intermembrane segment spans residues 88–227 (DEINNPSLTV…YFETWSALMV (140 aa)). Positions 161, 196, 198, 200, 204, and 207 each coordinate Cu cation. Glu-198 is a Mg(2+) binding site. A Phosphotyrosine modification is found at Tyr-218.

This sequence belongs to the cytochrome c oxidase subunit 2 family. Component of the cytochrome c oxidase (complex IV, CIV), a multisubunit enzyme composed of 14 subunits. The complex is composed of a catalytic core of 3 subunits MT-CO1, MT-CO2 and MT-CO3, encoded in the mitochondrial DNA, and 11 supernumerary subunits COX4I, COX5A, COX5B, COX6A, COX6B, COX6C, COX7A, COX7B, COX7C, COX8 and NDUFA4, which are encoded in the nuclear genome. The complex exists as a monomer or a dimer and forms supercomplexes (SCs) in the inner mitochondrial membrane with NADH-ubiquinone oxidoreductase (complex I, CI) and ubiquinol-cytochrome c oxidoreductase (cytochrome b-c1 complex, complex III, CIII), resulting in different assemblies (supercomplex SCI(1)III(2)IV(1) and megacomplex MCI(2)III(2)IV(2)). Found in a complex with TMEM177, COA6, COX18, COX20, SCO1 and SCO2. Interacts with TMEM177 in a COX20-dependent manner. Interacts with COX20. Interacts with COX16. Requires Cu cation as cofactor.

It is found in the mitochondrion inner membrane. It catalyses the reaction 4 Fe(II)-[cytochrome c] + O2 + 8 H(+)(in) = 4 Fe(III)-[cytochrome c] + 2 H2O + 4 H(+)(out). In terms of biological role, component of the cytochrome c oxidase, the last enzyme in the mitochondrial electron transport chain which drives oxidative phosphorylation. The respiratory chain contains 3 multisubunit complexes succinate dehydrogenase (complex II, CII), ubiquinol-cytochrome c oxidoreductase (cytochrome b-c1 complex, complex III, CIII) and cytochrome c oxidase (complex IV, CIV), that cooperate to transfer electrons derived from NADH and succinate to molecular oxygen, creating an electrochemical gradient over the inner membrane that drives transmembrane transport and the ATP synthase. Cytochrome c oxidase is the component of the respiratory chain that catalyzes the reduction of oxygen to water. Electrons originating from reduced cytochrome c in the intermembrane space (IMS) are transferred via the dinuclear copper A center (CU(A)) of subunit 2 and heme A of subunit 1 to the active site in subunit 1, a binuclear center (BNC) formed by heme A3 and copper B (CU(B)). The BNC reduces molecular oxygen to 2 water molecules using 4 electrons from cytochrome c in the IMS and 4 protons from the mitochondrial matrix. The sequence is that of Cytochrome c oxidase subunit 2 (MT-CO2) from Canis mesomelas elongae (Eastern African black-backed jackal).